The primary structure comprises 65 residues: MPKMKTDRGAAKRFKKTGSGGFKCKHANKRHILTKKTTKRKRHLRAPGMVAKPDLARVSAMLPYA.

Basic and acidic residues predominate over residues M1–A10. The disordered stretch occupies residues M1 to C24.

This sequence belongs to the bacterial ribosomal protein bL35 family.

The protein is Large ribosomal subunit protein bL35 of Tolumonas auensis (strain DSM 9187 / NBRC 110442 / TA 4).